Here is a 178-residue protein sequence, read N- to C-terminus: Sec-independent protein translocase protein TatB (178 aa).

The helical transmembrane segment at Met1–Gly21 threads the bilayer. A compositionally biased stretch (polar residues) spans Thr77–Thr86. The interval Thr77–Ser178 is disordered. The segment covering Pro93–Ala102 has biased composition (basic and acidic residues). Over residues His155–His165 the composition is skewed to low complexity. Over residues Glu166–Ser178 the composition is skewed to basic and acidic residues.

This sequence belongs to the TatB family. As to quaternary structure, the Tat system comprises two distinct complexes: a TatABC complex, containing multiple copies of TatA, TatB and TatC subunits, and a separate TatA complex, containing only TatA subunits. Substrates initially bind to the TatABC complex, which probably triggers association of the separate TatA complex to form the active translocon.

The protein resides in the cell inner membrane. Functionally, part of the twin-arginine translocation (Tat) system that transports large folded proteins containing a characteristic twin-arginine motif in their signal peptide across membranes. Together with TatC, TatB is part of a receptor directly interacting with Tat signal peptides. TatB may form an oligomeric binding site that transiently accommodates folded Tat precursor proteins before their translocation. This is Sec-independent protein translocase protein TatB from Nitrobacter hamburgensis (strain DSM 10229 / NCIMB 13809 / X14).